Reading from the N-terminus, the 467-residue chain is Putative serine/threonine-protein kinase R400 (467 aa).

The Protein kinase domain maps to 99 to 467 (GVKLIYIKSG…STGQKPTKKV (369 aa)). ATP-binding positions include 105 to 113 (IKSGTTGHT) and K129. The Proton acceptor role is filled by D272. The interval 443–467 (LFQQGNGSKQPVPKKSTGQKPTKKV) is disordered. Polar residues predominate over residues 458–467 (STGQKPTKKV).

Belongs to the protein kinase superfamily. Ser/Thr protein kinase family.

The protein localises to the virion. The catalysed reaction is L-seryl-[protein] + ATP = O-phospho-L-seryl-[protein] + ADP + H(+). The enzyme catalyses L-threonyl-[protein] + ATP = O-phospho-L-threonyl-[protein] + ADP + H(+). The protein is Putative serine/threonine-protein kinase R400 of Acanthamoeba polyphaga mimivirus (APMV).